Here is an 816-residue protein sequence, read N- to C-terminus: Phosphatidylinositol 4-kinase beta (816 aa).

The tract at residues 1–30 (MGDTVVEPAPLKPTSEPTSGPPGNNGGSLL) is disordered. G2 carries the N-acetylglycine modification. The PIK helical domain occupies 29-242 (LLSVITEGVG…GTKLRKLILS (214 aa)). Residues 41–67 (SVIDPEVAQKACQEVLEKVKLLHGGVA) are interaction with ACBD3. Disordered regions lie at residues 101–120 (EDEM…RRRR) and 248–318 (AHRK…SFSS). S258 carries the post-translational modification Phosphoserine. A Phosphothreonine modification is found at T263. Residues S266, S275, S277, S284, and S294 each carry the phosphoserine modification. Polar residues-rich tracts occupy residues 278–297 (DATA…SNPK) and 306–318 (SSST…SFSS). S428 is modified (phosphoserine). T438 bears the Phosphothreonine mark. Phosphoserine is present on S511. Phosphothreonine occurs at positions 517 and 519. One can recognise a PI3K/PI4K catalytic domain in the interval 535–801 (EPWQEKVRRI…MVDGSMRSIT (267 aa)). Residues 541–547 (VRRIREG) form a G-loop region. The segment at 668-676 (QVKDRHNGN) is catalytic loop. Residues 687–711 (HIDFGFILSSSPRNLGFETSAFKLT) form an activation loop region.

This sequence belongs to the PI3/PI4-kinase family. Type III PI4K subfamily. Interacts with ARF1 and ARF3 in the Golgi complex, but not with ARF4, ARF5 or ARF6. Interacts with NCS1/FREQ in a calcium-independent manner. Interacts with CALN1/CABP8 and CALN2/CABP7; in a calcium-dependent manner; this interaction competes with NCS1/FREQ binding. Interacts with ACBD3. Interacts with ARMH3, YWHAB, YWHAE, YWHAG, YWHAH, YWHAQ, YWHAZ and SFN. Interacts with GGA2 (via VHS domain); the interaction is important for PI4KB location at the Golgi apparatus membrane. Interacts with ATG9A. In terms of assembly, (Microbial infection) Interacts with Aichi virus protein 3A. Part of a complex Aichi virus protein 3A/ACBD3/PI4KB that allows the synthesis of PI4P at the viral RNA replication sites. Requires Mg(2+) as cofactor. Mn(2+) serves as cofactor. As to expression, widely expressed with highest levels in heart, skeletal muscle, pancreas, testis and ovary. Weakly expressed in liver. Expressed in the innear ear in the epithelium of the spinal organ of corti.

Its subcellular location is the endomembrane system. It is found in the mitochondrion outer membrane. It localises to the rough endoplasmic reticulum membrane. The protein localises to the golgi apparatus. The protein resides in the golgi apparatus membrane. Its subcellular location is the cytoplasm. It is found in the perinuclear region. It catalyses the reaction a 1,2-diacyl-sn-glycero-3-phospho-(1D-myo-inositol) + ATP = a 1,2-diacyl-sn-glycero-3-phospho-(1D-myo-inositol 4-phosphate) + ADP + H(+). With respect to regulation, inhibited by wortmannin and adenosine. Increased kinase activity upon interaction with NCS1/FREQ. (Microbial infection) Activated by Aichi virus protein 3A, this activation is sensitized by ACBD3. Its function is as follows. Phosphorylates phosphatidylinositol (PI) in the first committed step in the production of the second messenger inositol-1,4,5,-trisphosphate (PIP). May regulate Golgi disintegration/reorganization during mitosis, possibly via its phosphorylation. Involved in Golgi-to-plasma membrane trafficking. May play an important role in the inner ear development. Functionally, (Microbial infection) Plays an essential role in Aichi virus RNA replication. Recruited by ACBD3 at the viral replication sites. In terms of biological role, (Microbial infection) Required for cellular spike-mediated entry of human coronavirus SARS-CoV. This chain is Phosphatidylinositol 4-kinase beta, found in Homo sapiens (Human).